A 382-amino-acid polypeptide reads, in one-letter code: MKTELCLFDRTLNLQRYPKRAQELLQAWDAGDEFIIKHVEEELNLEDNKNILILNDNFGALSCWFSEKHNVTMMTDSFVSQRGTLKNLQRNQCNRVQLISSTEEMPEGFDLVIMQIPKNNRMLAWQLQQLRQSMTAECPIIAVNKAKEIHSSTLEVFEDYLGETKTSLAWKKHRLVFSNANATNPLTIAEAVCWSVDNEDIDLLNYPNVYSGERLDQGARFMLEHIPVDAELRHIIDLGCGNGVLSVKAAQLNPEARITCIDESFMAVESARRNLEVNLGKERQFQFIANNCLDGFKKHSSYLVLCNPPFHQGQAVTDHIAWQMFCDAKHILCKEGKLLVIGNRHLDYDDKLCRLFGEENVTTIASNSKFVILEAVKAEKSK.

This sequence belongs to the methyltransferase superfamily. RlmG family.

It is found in the cytoplasm. It catalyses the reaction guanosine(1835) in 23S rRNA + S-adenosyl-L-methionine = N(2)-methylguanosine(1835) in 23S rRNA + S-adenosyl-L-homocysteine + H(+). Specifically methylates the guanine in position 1835 (m2G1835) of 23S rRNA. The polypeptide is Ribosomal RNA large subunit methyltransferase G (Aliivibrio salmonicida (strain LFI1238) (Vibrio salmonicida (strain LFI1238))).